The following is a 127-amino-acid chain: Aspartate 1-decarboxylase (127 aa).

Residue S25 is the Schiff-base intermediate with substrate; via pyruvic acid of the active site. S25 is modified (pyruvic acid (Ser)). T57 lines the substrate pocket. Residue Y58 is the Proton donor of the active site. 73-75 serves as a coordination point for substrate; it reads GAA.

This sequence belongs to the PanD family. Heterooctamer of four alpha and four beta subunits. The cofactor is pyruvate. Post-translationally, is synthesized initially as an inactive proenzyme, which is activated by self-cleavage at a specific serine bond to produce a beta-subunit with a hydroxyl group at its C-terminus and an alpha-subunit with a pyruvoyl group at its N-terminus.

The protein resides in the cytoplasm. The catalysed reaction is L-aspartate + H(+) = beta-alanine + CO2. It participates in cofactor biosynthesis; (R)-pantothenate biosynthesis; beta-alanine from L-aspartate: step 1/1. Catalyzes the pyruvoyl-dependent decarboxylation of aspartate to produce beta-alanine. This chain is Aspartate 1-decarboxylase, found in Bacillus pumilus (strain SAFR-032).